An 897-amino-acid chain; its full sequence is Major intrinsically disordered Notch2-binding receptor 1 (897 aa).

Over 1–872 (MDAMPEYSLF…AEFRRAKACK (872 aa)) the chain is Cytoplasmic. Disordered stretches follow at residues 405–433 (AKDK…SVAC), 450–502 (SINC…EDSE), and 688–766 (TRRS…PPKD). Polar residues-rich tracts occupy residues 411–423 (ASPS…SNGS) and 452–471 (NCPS…GTQT). The segment covering 472 to 498 (EQHESRKVKDYPSQNKFKERPPFKHSE) has biased composition (basic and acidic residues). Over residues 697-724 (EENSATESKVASITNSPRDWRTVSYSSH) the composition is skewed to polar residues. Over residues 725–756 (NGEEGKERDRHSEGKERHRKSREAERQYEAHQ) the composition is skewed to basic and acidic residues. A helical membrane pass occupies residues 873–893 (IGALIFAAACTVILVIVVPIC). At 894 to 897 (TMKS) the chain is on the extracellular side.

The protein belongs to the MINAR family.

The protein resides in the cell membrane. Its function is as follows. Intrinsically disordered protein which may negatively regulate mTOR signaling pathway by stabilizing the mTOR complex component DEPTOR. Negatively regulates angiogenesis. Negatively regulates cell growth. May play a role in neuronal development. This chain is Major intrinsically disordered Notch2-binding receptor 1 (minar1), found in Danio rerio (Zebrafish).